Reading from the N-terminus, the 278-residue chain is MKNAPAVSFSAMPSADAERPILVFDSGIGGLTVLREARVLMPDRRFVYVADDAGFPYGGWEEDALRERIVELFGKLIAAYDPEIAVIACNTASTLVLDDLRQAYPSVPFVGTVPAIKPAAERTSSGLVSVLATPGTVRRAYTRDLIQSFATQCHVRLVGADQLATVAEAHIRGERIDEALVVEQIAPCFIEQDGNRTDIVVLACTHYPFLANVFRRLAPWPVDWLDPAEAIARRTVSLLKPRRADEELHHHNDLAVVTSRNPDYAIRRLMQGFGLHFA.

Substrate-binding positions include 25-26 (DS) and 57-58 (YG). The active-site Proton donor/acceptor is cysteine 89. 90 to 91 (NT) contacts substrate. Cysteine 204 serves as the catalytic Proton donor/acceptor. 205 to 206 (TH) is a substrate binding site.

It belongs to the aspartate/glutamate racemases family.

The catalysed reaction is L-glutamate = D-glutamate. Its pathway is cell wall biogenesis; peptidoglycan biosynthesis. Provides the (R)-glutamate required for cell wall biosynthesis. The sequence is that of Glutamate racemase from Brucella anthropi (strain ATCC 49188 / DSM 6882 / CCUG 24695 / JCM 21032 / LMG 3331 / NBRC 15819 / NCTC 12168 / Alc 37) (Ochrobactrum anthropi).